We begin with the raw amino-acid sequence, 181 residues long: Histone deacetylase complex subunit SAP30L-B (181 aa).

Disulfide bonds link C26-C27 and C35-C71. The Atypical zinc finger occupies 26 to 74; that stretch reads CCLIDGGERCPRPAGNASFSKRVQKSISQKKLKLDIDKSVRHLYICDFH. Positions 82 to 103 are disordered; the sequence is RNKRKRKTSDDGGDSPEHETDV. The short motif at 83–88 is the Nuclear localization signal (NLS) element; it reads NKRKRK. The tract at residues 85–87 is important for DNA and phosphoinositide binding; it reads RKR.

Belongs to the SAP30 family. Interacts with components of the histone deacetylase complex sin3a, hdac1 and hdac2. Binds histones and nucleosomes.

It is found in the nucleus. It localises to the nucleolus. Functionally, functions as a transcription repressor, probably via its interaction with histone deacetylase complexes. Involved in the functional recruitment of the class 1 Sin3-histone deacetylase complex (HDAC) to the nucleolus. Binds DNA, apparently without sequence-specificity, and bends bound double-stranded DNA. Binds phosphoinositol phosphates (phosphoinositol 3-phosphate, phosphoinositol 4-phosphate and phosphoinositol 5-phosphate) via the same basic sequence motif that mediates DNA binding and nuclear import. This is Histone deacetylase complex subunit SAP30L-B (sap30l-b) from Xenopus laevis (African clawed frog).